Here is a 126-residue protein sequence, read N- to C-terminus: Profilin-1A (126 aa).

An actin binding region spans residues 2 to 36 (SWQTYVDTNLVGTGAVTQAAILGLDGNTWATSAGF). Residue K104 is modified to N6,N6,N6-trimethyllysine.

The protein belongs to the profilin family. In terms of assembly, occurs in many kinds of cells as a complex with monomeric actin in a 1:1 ratio.

The protein localises to the cytoplasm. The protein resides in the cytoskeleton. Its function is as follows. Binds to actin and affects the structure of the cytoskeleton. At high concentrations, profilin prevents the polymerization of actin, whereas it enhances it at low concentrations. By binding to PIP2, it inhibits the formation of IP3 and DG. The sequence is that of Profilin-1A from Acanthamoeba castellanii (Amoeba).